Reading from the N-terminus, the 294-residue chain is Glycine--tRNA ligase alpha subunit (294 aa).

The protein belongs to the class-II aminoacyl-tRNA synthetase family. In terms of assembly, tetramer of two alpha and two beta subunits.

It is found in the cytoplasm. It carries out the reaction tRNA(Gly) + glycine + ATP = glycyl-tRNA(Gly) + AMP + diphosphate. The sequence is that of Glycine--tRNA ligase alpha subunit from Sulfurovum sp. (strain NBC37-1).